The primary structure comprises 233 residues: Purine nucleoside phosphorylase DeoD-type (233 aa).

His-4 is an a purine D-ribonucleoside binding site. Phosphate contacts are provided by residues Gly-20, Arg-24, Arg-43, and 87 to 90 (RIGT). A purine D-ribonucleoside-binding positions include 179 to 181 (EME) and 203 to 204 (SD). Asp-204 functions as the Proton donor in the catalytic mechanism.

Belongs to the PNP/UDP phosphorylase family. As to quaternary structure, homohexamer; trimer of homodimers.

The catalysed reaction is a purine D-ribonucleoside + phosphate = a purine nucleobase + alpha-D-ribose 1-phosphate. It catalyses the reaction a purine 2'-deoxy-D-ribonucleoside + phosphate = a purine nucleobase + 2-deoxy-alpha-D-ribose 1-phosphate. Catalyzes the reversible phosphorolytic breakdown of the N-glycosidic bond in the beta-(deoxy)ribonucleoside molecules, with the formation of the corresponding free purine bases and pentose-1-phosphate. The protein is Purine nucleoside phosphorylase DeoD-type of Helicobacter pylori (strain G27).